The chain runs to 324 residues: UDP-galactose transporter homolog 1 (324 aa).

2 consecutive transmembrane segments (helical) span residues 7-27 (LVIAVCGIYATFLTWSLAQEP) and 42-62 (HSSFIVLCQALTAAVVGLCYL). N97 is a glycosylation site (N-linked (GlcNAc...) asparagine). Transmembrane regions (helical) follow at residues 106 to 126 (VGYMLAKSCKLLPIMLVHVLV), 135 to 155 (KALVGVLVSGGVALFTLGGAE), 161 to 181 (ASLYGLGMLLVSLFLDGLTNA), 199 to 219 (HLMVALNTAIVLWNLAYLVLF), 237 to 257 (ILTYLFTYCACGALGQCFVFF), 265 to 285 (LVLATVTVTRKMVSMLLSIVV), and 290 to 310 (VRPVQWLGILVVFGGIIWETV).

This sequence belongs to the nucleotide-sugar transporter family. SLC35B subfamily.

It localises to the endoplasmic reticulum membrane. In terms of biological role, may be involved in specific transport of UDP-Gal from the cytosol to the Golgi lumen. Involved in the maintenance of optimal conditions for the folding of secretory pathway proteins in the endoplasmic reticulum. The sequence is that of UDP-galactose transporter homolog 1 (HUT1) from Eremothecium gossypii (strain ATCC 10895 / CBS 109.51 / FGSC 9923 / NRRL Y-1056) (Yeast).